A 243-amino-acid polypeptide reads, in one-letter code: Carboxy-S-adenosyl-L-methionine synthase (243 aa).

S-adenosyl-L-methionine contacts are provided by residues Y40, 65 to 67 (GCS), 90 to 91 (DN), 118 to 119 (DI), N133, and R200.

Belongs to the class I-like SAM-binding methyltransferase superfamily. Cx-SAM synthase family. As to quaternary structure, homodimer.

The catalysed reaction is prephenate + S-adenosyl-L-methionine = carboxy-S-adenosyl-L-methionine + 3-phenylpyruvate + H2O. Functionally, catalyzes the conversion of S-adenosyl-L-methionine (SAM) to carboxy-S-adenosyl-L-methionine (Cx-SAM). This chain is Carboxy-S-adenosyl-L-methionine synthase, found in Shewanella sp. (strain W3-18-1).